We begin with the raw amino-acid sequence, 213 residues long: Probable septum site-determining protein MinC (213 aa).

It belongs to the MinC family. As to quaternary structure, interacts with MinD and FtsZ.

Cell division inhibitor that blocks the formation of polar Z ring septums. Rapidly oscillates between the poles of the cell to destabilize FtsZ filaments that have formed before they mature into polar Z rings. Prevents FtsZ polymerization. The sequence is that of Probable septum site-determining protein MinC from Clostridium botulinum (strain Eklund 17B / Type B).